An 894-amino-acid polypeptide reads, in one-letter code: Histone-lysine N-methyltransferase EZ2 (894 aa).

Over residues 1–11 (MASSSKASDSS) the composition is skewed to low complexity. 3 disordered regions span residues 1-25 (MASS…GKDA), 395-447 (SSVS…KRQK), and 491-513 (KKTS…VGRQ). Residues 395–421 (SSVSAEESTTTPSADISETENVSSDLP) are compositionally biased toward polar residues. Positions 425-435 (LRKHKISKHGP) are enriched in basic residues. A compositionally biased stretch (polar residues) spans 503–513 (PATTMENVGRQ). Positions 527 to 577 (TLSCWSALERDLYLKGIEIFGKNSCLIARNLLSGLKTCIEVANYMYNNGAA) constitute an SANT domain. Positions 627 to 731 (AGHPTVRKRT…SLGEPLARGD (105 aa)) constitute a CXC domain. Residues 746 to 861 (QRILLGRSDV…ASEELFYDYR (116 aa)) enclose the SET domain. Positions 867–894 (APAWARRPEGSKKDEASVSHRRAHKVAR) are disordered. A compositionally biased stretch (basic and acidic residues) spans 872-884 (RRPEGSKKDEASV). Residues 885-894 (SHRRAHKVAR) are compositionally biased toward basic residues.

Belongs to the class V-like SAM-binding methyltransferase superfamily. Histone-lysine methyltransferase family. EZ subfamily.

Its subcellular location is the nucleus. It carries out the reaction L-lysyl(27)-[histone H3] + 3 S-adenosyl-L-methionine = N(6),N(6),N(6)-trimethyl-L-lysyl(27)-[histone H3] + 3 S-adenosyl-L-homocysteine + 3 H(+). Its function is as follows. Polycomb group (PcG) protein. Catalytic subunit of some PcG multiprotein complex, which methylates 'Lys-27' of histone H3, leading to transcriptional repression of the affected target genes. PcG proteins are not required to initiate repression, but to maintain it during later stages of development. The chain is Histone-lysine N-methyltransferase EZ2 (EZ2) from Zea mays (Maize).